A 378-amino-acid chain; its full sequence is Acetylornithine deacetylase (378 aa).

Residue His76 participates in Zn(2+) binding. Asp78 is an active-site residue. Residue Asp108 coordinates Zn(2+). Residue Glu140 is part of the active site. Glu141, Glu165, and His351 together coordinate Zn(2+).

It belongs to the peptidase M20A family. ArgE subfamily. Homodimer. Zn(2+) is required as a cofactor. Co(2+) serves as cofactor. Requires glutathione as cofactor.

The protein resides in the cytoplasm. It catalyses the reaction N(2)-acetyl-L-ornithine + H2O = L-ornithine + acetate. It participates in amino-acid biosynthesis; L-arginine biosynthesis; L-ornithine from N(2)-acetyl-L-ornithine (linear): step 1/1. Functionally, catalyzes the hydrolysis of the amide bond of N(2)-acetylated L-amino acids. Cleaves the acetyl group from N-acetyl-L-ornithine to form L-ornithine, an intermediate in L-arginine biosynthesis pathway, and a branchpoint in the synthesis of polyamines. The sequence is that of Acetylornithine deacetylase from Aliivibrio fischeri (strain MJ11) (Vibrio fischeri).